The chain runs to 321 residues: 1D-myo-inositol 2-acetamido-2-deoxy-alpha-D-glucopyranoside deacetylase (321 aa).

Zn(2+) is bound by residues His-15, Asp-18, and His-150. Residues 280–321 (PEGERESDLFAGLPPATDGTGAAGAPSATGAANPADAEGGAA) are disordered. The span at 290–321 (AGLPPATDGTGAAGAPSATGAANPADAEGGAA) shows a compositional bias: low complexity.

The protein belongs to the MshB deacetylase family. It depends on Zn(2+) as a cofactor.

It catalyses the reaction 1D-myo-inositol 2-acetamido-2-deoxy-alpha-D-glucopyranoside + H2O = 1D-myo-inositol 2-amino-2-deoxy-alpha-D-glucopyranoside + acetate. Its function is as follows. Catalyzes the deacetylation of 1D-myo-inositol 2-acetamido-2-deoxy-alpha-D-glucopyranoside (GlcNAc-Ins) in the mycothiol biosynthesis pathway. The sequence is that of 1D-myo-inositol 2-acetamido-2-deoxy-alpha-D-glucopyranoside deacetylase from Streptomyces griseus subsp. griseus (strain JCM 4626 / CBS 651.72 / NBRC 13350 / KCC S-0626 / ISP 5235).